A 338-amino-acid polypeptide reads, in one-letter code: Alanine racemase (338 aa).

K33 (proton acceptor; specific for D-alanine) is an active-site residue. At K33 the chain carries N6-(pyridoxal phosphate)lysine. Position 126 (R126) interacts with substrate. Y236 serves as the catalytic Proton acceptor; specific for L-alanine. M284 contributes to the substrate binding site.

Belongs to the alanine racemase family. Requires pyridoxal 5'-phosphate as cofactor.

The enzyme catalyses L-alanine = D-alanine. The protein operates within amino-acid biosynthesis; D-alanine biosynthesis; D-alanine from L-alanine: step 1/1. Catalyzes the interconversion of L-alanine and D-alanine. May also act on other amino acids. This is Alanine racemase (alr) from Aquifex aeolicus (strain VF5).